The primary structure comprises 356 residues: UDP-N-acetylglucosamine--N-acetylmuramyl-(pentapeptide) pyrophosphoryl-undecaprenol N-acetylglucosamine transferase (356 aa).

3 residues coordinate UDP-N-acetyl-alpha-D-glucosamine: Arg-166, Ser-196, and Gln-290.

It belongs to the glycosyltransferase 28 family. MurG subfamily.

It is found in the cell membrane. It catalyses the reaction Mur2Ac(oyl-L-Ala-gamma-D-Glu-L-Lys-D-Ala-D-Ala)-di-trans,octa-cis-undecaprenyl diphosphate + UDP-N-acetyl-alpha-D-glucosamine = beta-D-GlcNAc-(1-&gt;4)-Mur2Ac(oyl-L-Ala-gamma-D-Glu-L-Lys-D-Ala-D-Ala)-di-trans,octa-cis-undecaprenyl diphosphate + UDP + H(+). It participates in cell wall biogenesis; peptidoglycan biosynthesis. In terms of biological role, cell wall formation. Catalyzes the transfer of a GlcNAc subunit on undecaprenyl-pyrophosphoryl-MurNAc-pentapeptide (lipid intermediate I) to form undecaprenyl-pyrophosphoryl-MurNAc-(pentapeptide)GlcNAc (lipid intermediate II). The polypeptide is UDP-N-acetylglucosamine--N-acetylmuramyl-(pentapeptide) pyrophosphoryl-undecaprenol N-acetylglucosamine transferase (Staphylococcus aureus (strain MRSA252)).